The chain runs to 149 residues: Nucleoside diphosphate kinase (149 aa).

Residues Lys-9, Phe-57, Arg-85, Thr-91, Arg-102, and Asn-112 each coordinate ATP. His-115 (pros-phosphohistidine intermediate) is an active-site residue.

The protein belongs to the NDK family. The cofactor is Mg(2+).

Its subcellular location is the cytoplasm. The enzyme catalyses a 2'-deoxyribonucleoside 5'-diphosphate + ATP = a 2'-deoxyribonucleoside 5'-triphosphate + ADP. It carries out the reaction a ribonucleoside 5'-diphosphate + ATP = a ribonucleoside 5'-triphosphate + ADP. In terms of biological role, major role in the synthesis of nucleoside triphosphates other than ATP. The ATP gamma phosphate is transferred to the NDP beta phosphate via a ping-pong mechanism, using a phosphorylated active-site intermediate. This chain is Nucleoside diphosphate kinase, found in Methanoculleus marisnigri (strain ATCC 35101 / DSM 1498 / JR1).